The chain runs to 1959 residues: Zinc finger protein hangover (1959 aa).

A ZAD domain is found at Asn79–Trp155. Residues Cys81, Cys84, Cys128, and Cys131 each coordinate Zn(2+). The tract at residues Gly178–Thr208 is disordered. The segment covering Gln192 to Ala205 has biased composition (basic and acidic residues). The residue at position 228 (Ser228) is a Phosphoserine. Thr246 is modified (phosphothreonine). Residues Ala318–His341 form a C2H2-type 1 zinc finger. The C2H2-type 2; degenerate zinc-finger motif lies at Met447–Lys469. The C2H2-type 3 zinc-finger motif lies at Tyr581–His604. Positions Ala674 to Ser762 are disordered. Residues Asp677–Glu693 are compositionally biased toward polar residues. Ser680 carries the post-translational modification Phosphoserine. Composition is skewed to low complexity over residues Ser716–Pro727 and Thr741–Ala759. C2H2-type zinc fingers lie at residues Gln770–His793 and Tyr801–His824. A phosphoserine mark is found at Ser832, Ser894, Ser895, Ser898, and Ser899. A C2H2-type 6 zinc finger spans residues Lys908–His930. Residues Thr960–Gln991 form a disordered region. C2H2-type zinc fingers lie at residues Met1011–His1034, Ile1042–His1065, Phe1078–His1101, Tyr1154–His1176, and Tyr1184–His1207. Positions Thr1233–Gln1253 are enriched in polar residues. The tract at residues Thr1233–Ser1301 is disordered. The span at His1255 to His1267 shows a compositional bias: basic residues. A compositionally biased stretch (acidic residues) spans Asp1271–Gln1283. 2 consecutive C2H2-type zinc fingers follow at residues Val1318–His1340 and Tyr1375–His1397. A compositionally biased stretch (low complexity) spans Gln1445 to Ser1467. The disordered stretch occupies residues Gln1445 to Lys1471. 2 consecutive C2H2-type zinc fingers follow at residues Leu1476–His1499 and Trp1552–His1574. The segment at Ala1627–Val1865 is disordered. A compositionally biased stretch (acidic residues) spans Pro1639–Gly1695. A compositionally biased stretch (low complexity) spans Gln1697–Asn1715. Acidic residues-rich tracts occupy residues Gln1716–Glu1758 and Ser1782–Pro1829. Residues Ser1833–His1851 show a composition bias toward low complexity. The C2H2-type 16 zinc-finger motif lies at Phe1873–His1895. Residues Pro1933–Asn1959 are disordered. Positions Asn1942–Thr1952 are enriched in low complexity.

In terms of tissue distribution, expressed ubiquitously in the nervous system, in neurons not glia.

Its subcellular location is the nucleus. Its function is as follows. Required for normal development of ethanol tolerance. Relies on two distinct molecular pathways: a cellular stress pathway defined by hang, and a parallel pathway requiring octopamine. The chain is Zinc finger protein hangover (hang) from Drosophila melanogaster (Fruit fly).